A 591-amino-acid chain; its full sequence is Zinc finger protein 48 (591 aa).

Met1 carries the N-acetylmethionine modification. Disordered stretches follow at residues Met1–Glu24 and Gly55–Asp80. Composition is skewed to basic and acidic residues over residues Glu8 to Glu24 and Gly55 to Val65. Ser12 bears the Phosphoserine mark. Lys58 is covalently cross-linked (Glycyl lysine isopeptide (Lys-Gly) (interchain with G-Cter in SUMO2)). 2 C2H2-type zinc fingers span residues Ala83–His105 and Tyr111–His133. A disordered region spans residues Arg131–Glu160. A Glycyl lysine isopeptide (Lys-Gly) (interchain with G-Cter in SUMO2) cross-link involves residue Lys150. 2 consecutive C2H2-type zinc fingers follow at residues Thr163–His185 and Tyr191–His213. The tract at residues Arg206–Ala241 is disordered. Residues Pro224–Ala235 show a composition bias toward low complexity. Residue Lys240 forms a Glycyl lysine isopeptide (Lys-Gly) (interchain with G-Cter in SUMO2) linkage. 2 consecutive C2H2-type zinc fingers follow at residues Tyr246–His268 and Phe274–His296. A Glycyl lysine isopeptide (Lys-Gly) (interchain with G-Cter in SUMO2) cross-link involves residue Lys300. 2 C2H2-type zinc fingers span residues Tyr302 to His324 and His330 to His352. The interval Pro372–Gly429 is disordered. Over residues Thr379 to Glu404 the composition is skewed to low complexity. The C2H2-type 9 zinc-finger motif lies at His423–His445. A Glycyl lysine isopeptide (Lys-Gly) (interchain with G-Cter in SUMO2) cross-link involves residue Lys449. The segment at Tyr451 to His473 adopts a C2H2-type 10 zinc-finger fold. A disordered region spans residues Ser464–Pro512. Pro residues predominate over residues Pro480–Ser496. 2 C2H2-type zinc fingers span residues His516–His538 and Tyr544–His566. The segment at Arg564–Glu591 is disordered. Positions Pro581–Glu591 are enriched in basic and acidic residues. Lys583 is covalently cross-linked (Glycyl lysine isopeptide (Lys-Gly) (interchain with G-Cter in SUMO2)).

Belongs to the krueppel C2H2-type zinc-finger protein family.

It localises to the nucleus. In terms of biological role, may be involved in transcriptional regulation. In Mus musculus (Mouse), this protein is Zinc finger protein 48 (Znf48).